The chain runs to 30 residues: Root cyclotide 1 (30 aa).

Positions G1–N30 form a cross-link, cyclopeptide (Gly-Asn). Disulfide bonds link C4/C21, C8/C23, and C13/C28.

In terms of processing, this is a cyclic peptide. As to expression, expressed in roots.

Its function is as follows. Probably participates in a plant defense mechanism. This chain is Root cyclotide 1, found in Viola hederacea (Australian violet).